The sequence spans 146 residues: Large ribosomal subunit protein uL11 (146 aa).

It belongs to the universal ribosomal protein uL11 family. In terms of assembly, part of the ribosomal stalk of the 50S ribosomal subunit. Interacts with L10 and the large rRNA to form the base of the stalk. L10 forms an elongated spine to which L12 dimers bind in a sequential fashion forming a multimeric L10(L12)X complex. One or more lysine residues are methylated.

Forms part of the ribosomal stalk which helps the ribosome interact with GTP-bound translation factors. In Corynebacterium jeikeium (strain K411), this protein is Large ribosomal subunit protein uL11.